A 213-amino-acid chain; its full sequence is tRNA (guanine-N(7)-)-methyltransferase (213 aa).

4 residues coordinate S-adenosyl-L-methionine: E38, E63, D91, and D113. D113 is an active-site residue. Residues K117, D149, and 192-195 (TEYE) contribute to the substrate site.

The protein belongs to the class I-like SAM-binding methyltransferase superfamily. TrmB family.

The enzyme catalyses guanosine(46) in tRNA + S-adenosyl-L-methionine = N(7)-methylguanosine(46) in tRNA + S-adenosyl-L-homocysteine. The protein operates within tRNA modification; N(7)-methylguanine-tRNA biosynthesis. Functionally, catalyzes the formation of N(7)-methylguanine at position 46 (m7G46) in tRNA. This chain is tRNA (guanine-N(7)-)-methyltransferase, found in Mycoplasmoides gallisepticum (strain R(low / passage 15 / clone 2)) (Mycoplasma gallisepticum).